The primary structure comprises 161 residues: Large ribosomal subunit protein uL15 (161 aa).

The tract at residues 1–43 is disordered; it reads MKLSEIADNVGSRKKRMRIGRGIGSGKGKTGGRGGKGQTARSG. A compositionally biased stretch (gly residues) spans 21–37; sequence RGIGSGKGKTGGRGGKG.

As to quaternary structure, part of the 50S ribosomal subunit.

In terms of biological role, binds to the 23S rRNA. This is Large ribosomal subunit protein uL15 from Rhodopseudomonas palustris (strain ATCC BAA-98 / CGA009).